Reading from the N-terminus, the 324-residue chain is MANMFALILVIATLVTGILWCVDKFVFAPKRRARQAAAQTASGDALDNATLNKVAPKPGWLETGASVFPVLAIVLIVRSFLYEPFQIPSGSMMPTLLIGDFILVEKFAYGIKDPIYQKTLIETGHPKRGDIVVFKYPEDPKLDYIKRAVGLPGDKITYDPVAKEVTIQPGCSSGQACENALPVTYSNVEPSDFVQTFARRNGGEATSGFFEVPLNETKENGIRLTERKETLGDVTHRILMVPIAQDQLGMYYQQPGQPLATWVVPPGQYFMMGDNRDNSADSRYWGFVPEANLVGKAVAIWMSFDKQEGEWPTGVRLSRIGGIH.

The Periplasmic portion of the chain corresponds to 1–3 (MAN). A helical membrane pass occupies residues 4 to 22 (MFALILVIATLVTGILWCV). Residues 23–58 (DKFVFAPKRRARQAAAQTASGDALDNATLNKVAPKP) lie on the Cytoplasmic side of the membrane. The helical transmembrane segment at 59–77 (GWLETGASVFPVLAIVLIV) threads the bilayer. Residues 78 to 324 (RSFLYEPFQI…VRLSRIGGIH (247 aa)) lie on the Periplasmic side of the membrane. Active-site residues include Ser91 and Lys146.

The protein belongs to the peptidase S26 family.

The protein resides in the cell inner membrane. The enzyme catalyses Cleavage of hydrophobic, N-terminal signal or leader sequences from secreted and periplasmic proteins.. The polypeptide is Signal peptidase I (lepB) (Salmonella typhi).